Reading from the N-terminus, the 318-residue chain is NADH-ubiquinone oxidoreductase chain 1 (318 aa).

A run of 8 helical transmembrane segments spans residues 2-22 (FMIN…FLTL), 70-90 (MFII…SPLP), 100-120 (LGVL…LWSG), 136-156 (VAQT…VLLM), 172-192 (LWLL…TLAE), 222-242 (LFFL…AILF), 253-273 (ELYT…FLWI), and 294-314 (LPLT…TASI).

The protein belongs to the complex I subunit 1 family. Core subunit of respiratory chain NADH dehydrogenase (Complex I) which is composed of 45 different subunits.

It localises to the mitochondrion inner membrane. The catalysed reaction is a ubiquinone + NADH + 5 H(+)(in) = a ubiquinol + NAD(+) + 4 H(+)(out). Core subunit of the mitochondrial membrane respiratory chain NADH dehydrogenase (Complex I) which catalyzes electron transfer from NADH through the respiratory chain, using ubiquinone as an electron acceptor. Essential for the catalytic activity and assembly of complex I. The sequence is that of NADH-ubiquinone oxidoreductase chain 1 (MT-ND1) from Balaenoptera physalus (Fin whale).